The following is a 502-amino-acid chain: Probable glycine dehydrogenase (decarboxylating) subunit 2 (502 aa).

At K273 the chain carries N6-(pyridoxal phosphate)lysine.

Belongs to the GcvP family. C-terminal subunit subfamily. The glycine cleavage system is composed of four proteins: P, T, L and H. In this organism, the P 'protein' is a heterodimer of two subunits. It depends on pyridoxal 5'-phosphate as a cofactor.

The catalysed reaction is N(6)-[(R)-lipoyl]-L-lysyl-[glycine-cleavage complex H protein] + glycine + H(+) = N(6)-[(R)-S(8)-aminomethyldihydrolipoyl]-L-lysyl-[glycine-cleavage complex H protein] + CO2. Functionally, the glycine cleavage system catalyzes the degradation of glycine. The P protein binds the alpha-amino group of glycine through its pyridoxal phosphate cofactor; CO(2) is released and the remaining methylamine moiety is then transferred to the lipoamide cofactor of the H protein. This chain is Probable glycine dehydrogenase (decarboxylating) subunit 2, found in Staphylococcus epidermidis (strain ATCC 35984 / DSM 28319 / BCRC 17069 / CCUG 31568 / BM 3577 / RP62A).